A 610-amino-acid chain; its full sequence is UvrABC system protein C (610 aa).

Residues 16–94 (SQPGVYRMYD…IKLYQPRYNV (79 aa)) enclose the GIY-YIG domain. The region spanning 204–239 (DQVLTQLISRMETASQNLEFEEAARIRDQIQAVRRV) is the UVR domain.

This sequence belongs to the UvrC family. As to quaternary structure, interacts with UvrB in an incision complex.

The protein resides in the cytoplasm. The UvrABC repair system catalyzes the recognition and processing of DNA lesions. UvrC both incises the 5' and 3' sides of the lesion. The N-terminal half is responsible for the 3' incision and the C-terminal half is responsible for the 5' incision. The sequence is that of UvrABC system protein C from Escherichia coli (strain ATCC 8739 / DSM 1576 / NBRC 3972 / NCIMB 8545 / WDCM 00012 / Crooks).